The primary structure comprises 352 residues: tRNA pseudouridine synthase D (352 aa).

The Nucleophile role is filled by Asp81. The TRUD domain maps to 157–303 (GVPNYFGTQR…MDHERRILRL (147 aa)).

The protein belongs to the pseudouridine synthase TruD family.

It catalyses the reaction uridine(13) in tRNA = pseudouridine(13) in tRNA. Its function is as follows. Responsible for synthesis of pseudouridine from uracil-13 in transfer RNAs. The protein is tRNA pseudouridine synthase D of Pseudomonas putida (strain ATCC 47054 / DSM 6125 / CFBP 8728 / NCIMB 11950 / KT2440).